Consider the following 503-residue polypeptide: MPPTTALSALLLLLLSPASHSHNGNETSTSAIKSSTVQSHQSATTSTEVTTGHPVASTLASTQPSNPTPFTTSTQSPSMPTSTPNPTSNQSGGNLTSSVSEVDKTKTSSPSSTAFTSSSGQTASSGGKSGDSFTTAPTTTLGLINVSSQPTDLNTTSKLLSTPTTDNTTSPQQPVDSSPSTASHPVGQHTPAAVPSSSGSTPSTDNSTLTWKPTTHKPLGTSEATQPLTSQTPGITTLPVSTLQQSMASTVGTTTEEFTHLISNGTPVAPPGPSTPSPIWAFGNYQLNCEPPIRPDEELLILNLTRASLCERSPLDEKEKLVELLCHSVKASFKPAEDLCTLHVAPILDNQAVAVKRIIIETKLSPKAVYELLKDRWDDLTEAGVSDMKLGKEGPPEVNEDRFSLPLIITIVCMASFLLLVAALYGCCHQRISQRKDQQRLTEELQTVENGYHDNPTLEVMETPSEMQEKKVVNLNGELGDSWIVPLDNLTKDDLDEEEDTHL.

An N-terminal signal peptide occupies residues 1–21 (MPPTTALSALLLLLLSPASHS). The segment at 19–236 (SHSHNGNETS…PLTSQTPGIT (218 aa)) is disordered. The segment covering 20 to 50 (HSHNGNETSTSAIKSSTVQSHQSATTSTEVT) has biased composition (polar residues). Over 22-404 (HNGNETSTSA…PPEVNEDRFS (383 aa)) the chain is Extracellular. 3 N-linked (GlcNAc...) asparagine glycosylation sites follow: Asn-25, Asn-89, and Asn-94. The span at 61–91 (STQPSNPTPFTTSTQSPSMPTSTPNPTSNQS) shows a compositional bias: low complexity. The span at 107–126 (TSSPSSTAFTSSSGQTASSG) shows a compositional bias: low complexity. Residues 131–183 (DSFTTAPTTTLGLINVSSQPTDLNTTSKLLSTPTTDNTTSPQQPVDSSPSTAS) are compositionally biased toward polar residues. Asn-145, Asn-154, Asn-167, and Asn-206 each carry an N-linked (GlcNAc...) asparagine glycan. Positions 196 to 208 (SSSGSTPSTDNST) are enriched in low complexity. Polar residues predominate over residues 222–236 (SEATQPLTSQTPGIT). N-linked (GlcNAc...) asparagine glycosylation is present at Asn-303. A helical membrane pass occupies residues 405-425 (LPLIITIVCMASFLLLVAALY). Topologically, residues 426–503 (GCCHQRISQR…DLDEEEDTHL (78 aa)) are cytoplasmic. At Thr-463 the chain carries Phosphothreonine. Ser-482 bears the Phosphoserine mark. At Thr-501 the chain carries Phosphothreonine.

The protein belongs to the podocalyxin family. As to quaternary structure, monomer; when associated with the membrane raft. Oligomer; when integrated in the apical membrane. Found in a complex with EZR, PODXL and NHERF2. Associates with the actin cytoskeleton through complex formation with EZR and NHERF2. Interacts (via the C-terminal PDZ-binding motif DTHL) with NHERF1 (via the PDZ domains); interaction is not detected in glomerular epithelium cells, take place early in the secretory pathway and is necessary for its apical membrane sorting. Interacts (via the C-terminal PDZ-binding motif DTHL) with NHERF2 (via the PDZ 1 domain); interaction is detected in glomerular epithelium cells. Interacts with EZR. Post-translationally, N- and O-linked glycosylated. Sialoglycoprotein. Expressed in liver cells and hematopoietic cells (at protein level). Glomerular epithelium cell (podocyte).

The protein resides in the apical cell membrane. It localises to the cell projection. The protein localises to the microvillus. Its subcellular location is the membrane raft. It is found in the lamellipodium. The protein resides in the filopodium. It localises to the ruffle. The protein localises to the membrane. Involved in the regulation of both adhesion and cell morphology and cancer progression. Functions as an anti-adhesive molecule that maintains an open filtration pathway between neighboring foot processes in the podocyte by charge repulsion. Acts as a pro-adhesive molecule, enhancing the adherence of cells to immobilized ligands, increasing the rate of migration and cell-cell contacts in an integrin-dependent manner. Induces the formation of apical actin-dependent microvilli. Involved in the formation of a preapical plasma membrane subdomain to set up initial epithelial polarization and the apical lumen formation during renal tubulogenesis. Plays a role in cancer development and aggressiveness by inducing cell migration and invasion through its interaction with the actin-binding protein EZR. Affects EZR-dependent signaling events, leading to increased activities of the MAPK and PI3K pathways in cancer cells. In Mus musculus (Mouse), this protein is Podocalyxin (Podxl).